A 402-amino-acid chain; its full sequence is Deoxyguanosinetriphosphate triphosphohydrolase-like protein (402 aa).

Positions 73-217 (RLTHTIEVAQ…AAIADDIAYN (145 aa)) constitute an HD domain.

Belongs to the dGTPase family. Type 2 subfamily.

This is Deoxyguanosinetriphosphate triphosphohydrolase-like protein from Brucella anthropi (strain ATCC 49188 / DSM 6882 / CCUG 24695 / JCM 21032 / LMG 3331 / NBRC 15819 / NCTC 12168 / Alc 37) (Ochrobactrum anthropi).